The following is a 273-amino-acid chain: Dermonecrotic toxin LspaSicTox-alphaIA2i (273 aa).

Residue histidine 5 is part of the active site. Residues glutamate 25 and aspartate 27 each coordinate Mg(2+). The active-site Nucleophile is the histidine 41. 2 disulfides stabilise this stretch: cysteine 45-cysteine 51 and cysteine 47-cysteine 190. Aspartate 85 lines the Mg(2+) pocket.

The protein belongs to the arthropod phospholipase D family. Class II subfamily. The cofactor is Mg(2+). Expressed by the venom gland.

The protein resides in the secreted. It carries out the reaction an N-(acyl)-sphingosylphosphocholine = an N-(acyl)-sphingosyl-1,3-cyclic phosphate + choline. The catalysed reaction is an N-(acyl)-sphingosylphosphoethanolamine = an N-(acyl)-sphingosyl-1,3-cyclic phosphate + ethanolamine. It catalyses the reaction a 1-acyl-sn-glycero-3-phosphocholine = a 1-acyl-sn-glycero-2,3-cyclic phosphate + choline. The enzyme catalyses a 1-acyl-sn-glycero-3-phosphoethanolamine = a 1-acyl-sn-glycero-2,3-cyclic phosphate + ethanolamine. In terms of biological role, dermonecrotic toxins cleave the phosphodiester linkage between the phosphate and headgroup of certain phospholipids (sphingolipid and lysolipid substrates), forming an alcohol (often choline) and a cyclic phosphate. This toxin acts on sphingomyelin (SM). It may also act on ceramide phosphoethanolamine (CPE), lysophosphatidylcholine (LPC) and lysophosphatidylethanolamine (LPE), but not on lysophosphatidylserine (LPS), and lysophosphatidylglycerol (LPG). It acts by transphosphatidylation, releasing exclusively cyclic phosphate products as second products. Induces dermonecrosis, hemolysis, increased vascular permeability, edema, inflammatory response, and platelet aggregation. In Loxosceles spadicea (Recluse spider), this protein is Dermonecrotic toxin LspaSicTox-alphaIA2i.